A 193-amino-acid chain; its full sequence is Xanthine phosphoribosyltransferase (193 aa).

2 residues coordinate xanthine: leucine 20 and threonine 27. 128 to 132 (ANGQA) provides a ligand contact to 5-phospho-alpha-D-ribose 1-diphosphate. Position 156 (lysine 156) interacts with xanthine.

This sequence belongs to the purine/pyrimidine phosphoribosyltransferase family. Xpt subfamily. In terms of assembly, homodimer.

It localises to the cytoplasm. The catalysed reaction is XMP + diphosphate = xanthine + 5-phospho-alpha-D-ribose 1-diphosphate. Its pathway is purine metabolism; XMP biosynthesis via salvage pathway; XMP from xanthine: step 1/1. Converts the preformed base xanthine, a product of nucleic acid breakdown, to xanthosine 5'-monophosphate (XMP), so it can be reused for RNA or DNA synthesis. The polypeptide is Xanthine phosphoribosyltransferase (Streptococcus uberis (strain ATCC BAA-854 / 0140J)).